A 174-amino-acid polypeptide reads, in one-letter code: Peptide deformylase (174 aa).

2 residues coordinate Fe cation: Cys-94 and His-136. Glu-137 is an active-site residue. His-140 contacts Fe cation.

It belongs to the polypeptide deformylase family. Requires Fe(2+) as cofactor.

It catalyses the reaction N-terminal N-formyl-L-methionyl-[peptide] + H2O = N-terminal L-methionyl-[peptide] + formate. Functionally, removes the formyl group from the N-terminal Met of newly synthesized proteins. Requires at least a dipeptide for an efficient rate of reaction. N-terminal L-methionine is a prerequisite for activity but the enzyme has broad specificity at other positions. The protein is Peptide deformylase of Rhizobium meliloti (strain 1021) (Ensifer meliloti).